Consider the following 469-residue polypeptide: MFNRLFRVCFLAALIMAFTLPNSVYAQKPIFKEVSVHDPSIIETNGTFYVFGSHLASAKSNDLMQWQQLTTSVSNDNPLIPNVYEELKETFEWAQSDTLWAADVTQLADGKYYMYYNACRGDSPRSAMGVAVADNIEGPYKNKGIFLKSGMEGTSSDGTPYDATKHPNVVDPHTFFDKDGKLWMVYGSYSGGIFILEMNPKTGFPLPGQGYGKKLLGGNHSRIEGPYVLYNPDTQYYYLYLSYGGLDATGGYNIRVARSKKPDGPYYDAEGNPMLDVRGKGGTFFDDRSIEPYGVKLMGSYTFETENEKGTGYVSPGHNSAYYDEKTGRSYLIFHTRFPGRGEEHEVRVHQLFMNKDGWPVAAPYRYAGETLKEVKQKDITGTYKLIQHGKDISADIKQTINIQLNKNHTISGEMTGTWRKTGKNTADITLAGKKYNGVFLRQWDSVREKNVMTFSVLNTSGEAVWGSK.

An N-terminal signal peptide occupies residues 1–26 (MFNRLFRVCFLAALIMAFTLPNSVYA). Aspartate 38 (proton acceptor) is an active-site residue. Residues aspartate 38, aspartate 122, 168 to 171 (NVVD), 188 to 190 (SYS), and 220 to 224 (HSRIE) each bind substrate. The active-site Proton donor is the glutamate 224. Position 318 (histidine 318) interacts with Ca(2+).

It belongs to the glycosyl hydrolase 43 family. Homodimer. Requires Ca(2+) as cofactor.

It is found in the secreted. It catalyses the reaction Endohydrolysis of (1-&gt;5)-alpha-arabinofuranosidic linkages in (1-&gt;5)-arabinans.. It functions in the pathway glycan metabolism; L-arabinan degradation. Its function is as follows. Involved in the degradation of arabinan and is a key enzyme in the complete degradation of the plant cell wall. Catalyzes the internal cleavage of alpha-(1-&gt;5)-L-arabinofuranosyl residues of the alpha-1,5-L-arabinan to produce arabino-oligosaccharides and L-arabinose. It is also active toward linear branched sugar beet arabinan, and pectin from apple. In Bacillus subtilis (strain 168), this protein is Extracellular endo-alpha-(1-&gt;5)-L-arabinanase 2 (abn2).